The chain runs to 235 residues: Cytochrome c-554 (235 aa).

Residues 1 to 24 form the signal peptide; sequence MKIMIACGLVAAALFTLTSGQSLA. 15 residues coordinate heme: cysteine 35, cysteine 38, histidine 39, histidine 51, cysteine 84, cysteine 87, histidine 88, cysteine 112, cysteine 115, histidine 116, histidine 126, cysteine 158, cysteine 161, histidine 162, and histidine 203. Residues 121–144 are disordered; the sequence is NFRGDHRKSGQAFEKSGKKTPRKD.

Post-translationally, binds 4 heme groups per subunit.

It localises to the periplasm. In terms of biological role, involved in ammonia oxidation; accepts electrons directly from hydroxylamine oxidoreductase (HAO). The polypeptide is Cytochrome c-554 (cycA1) (Nitrosomonas europaea (strain ATCC 19718 / CIP 103999 / KCTC 2705 / NBRC 14298)).